We begin with the raw amino-acid sequence, 467 residues long: Probable apyrase 2 (467 aa).

Topologically, residues 1–25 (MRRYSALPGGGARPDTLADRLHRYR) are cytoplasmic. The helical; Signal-anchor for type II membrane protein transmembrane segment at 26-46 (GVLLVILAPLALVSLVLLLMP) threads the bilayer. Residues 47–467 (RSPASSSAAA…PLGSAIEVAS (421 aa)) lie on the Extracellular side of the membrane. 70 to 80 (VIFDAGSSGSR) is an ATP binding site. The active-site Proton acceptor is the Glu-192. Residue 216–226 (GVVDLGGGSVQ) coordinates ATP.

This sequence belongs to the GDA1/CD39 NTPase family. It depends on Ca(2+) as a cofactor.

Its subcellular location is the membrane. The catalysed reaction is a ribonucleoside 5'-triphosphate + 2 H2O = a ribonucleoside 5'-phosphate + 2 phosphate + 2 H(+). Its function is as follows. Catalyzes the hydrolysis of phosphoanhydride bonds of nucleoside tri- and di-phosphates. This is Probable apyrase 2 (APY2) from Oryza sativa subsp. japonica (Rice).